Consider the following 163-residue polypeptide: Cyanate hydratase (163 aa).

Residues arginine 103, glutamate 106, and serine 129 contribute to the active site.

Belongs to the cyanase family.

The catalysed reaction is cyanate + hydrogencarbonate + 3 H(+) = NH4(+) + 2 CO2. Its function is as follows. Catalyzes the reaction of cyanate with bicarbonate to produce ammonia and carbon dioxide. This Ajellomyces dermatitidis (strain ER-3 / ATCC MYA-2586) (Blastomyces dermatitidis) protein is Cyanate hydratase.